The chain runs to 174 residues: Ribosome maturation factor RimM (174 aa).

The PRC barrel domain maps to 97–171 (SDGEYYWCDL…RMTVSLPEGL (75 aa)).

The protein belongs to the RimM family. In terms of assembly, binds ribosomal protein uS19.

It localises to the cytoplasm. An accessory protein needed during the final step in the assembly of 30S ribosomal subunit, possibly for assembly of the head region. Essential for efficient processing of 16S rRNA. May be needed both before and after RbfA during the maturation of 16S rRNA. It has affinity for free ribosomal 30S subunits but not for 70S ribosomes. This is Ribosome maturation factor RimM from Geotalea daltonii (strain DSM 22248 / JCM 15807 / FRC-32) (Geobacter daltonii).